Reading from the N-terminus, the 639-residue chain is UvrABC system protein C (639 aa).

Residues 20–97 (ERSGVYRMFD…IKKFQPKFNI (78 aa)) enclose the GIY-YIG domain. The UVR domain occupies 207–242 (KELQENLSRKMEELSSQMRFEEAAEIRDRIKALSYV).

Belongs to the UvrC family. Interacts with UvrB in an incision complex.

The protein localises to the cytoplasm. Functionally, the UvrABC repair system catalyzes the recognition and processing of DNA lesions. UvrC both incises the 5' and 3' sides of the lesion. The N-terminal half is responsible for the 3' incision and the C-terminal half is responsible for the 5' incision. The chain is UvrABC system protein C from Rickettsia africae (strain ESF-5).